Reading from the N-terminus, the 330-residue chain is Putative heme-binding peroxidase (330 aa).

H38 acts as the Proton acceptor in catalysis. Position 162 (H162) interacts with heme b. W178 serves as the catalytic Tryptophan radical intermediate. The interval 286-330 (GEYKSAPQKSPVPGAPGAGKDGEANPLARQNERAHGQAQHALAKL) is disordered.

The protein belongs to the peroxidase family. Cytochrome c peroxidase subfamily. It depends on heme b as a cofactor.

Destroys radicals which are normally produced within the cells and which are toxic to biological systems. This chain is Putative heme-binding peroxidase (CCP2), found in Mycosarcoma maydis (Corn smut fungus).